Here is a 256-residue protein sequence, read N- to C-terminus: Geranylgeranylglyceryl phosphate synthase (256 aa).

Mg(2+) is bound by residues D28 and S53. Sn-glycerol 1-phosphate contacts are provided by residues 172–178 (YLEAGSG), 203–204 (GG), and 225–226 (GT).

Belongs to the GGGP/HepGP synthase family. Group II subfamily. Requires Mg(2+) as cofactor.

The protein localises to the cytoplasm. The catalysed reaction is sn-glycerol 1-phosphate + (2E,6E,10E)-geranylgeranyl diphosphate = sn-3-O-(geranylgeranyl)glycerol 1-phosphate + diphosphate. Its pathway is membrane lipid metabolism; glycerophospholipid metabolism. Prenyltransferase that catalyzes the transfer of the geranylgeranyl moiety of geranylgeranyl diphosphate (GGPP) to the C3 hydroxyl of sn-glycerol-1-phosphate (G1P). This reaction is the first ether-bond-formation step in the biosynthesis of archaeal membrane lipids. The protein is Geranylgeranylglyceryl phosphate synthase of Methanococcus maripaludis (strain DSM 14266 / JCM 13030 / NBRC 101832 / S2 / LL).